The sequence spans 505 residues: MPDSMMDMEHRDHQLHRQQQQSHHHQPPRLTASTSTFAPPAPAGSQSEERDRDRDRERDHHLHHHQSNNVASSPLPVTASIQLHQQQPQQQQQQQPLTQLQQPQLREREHHQQQQQQQQQMMQQPQQQQQMQQPQQQLPHSHHALMQQSQQQQAIHRAEARRADEEISDKASTCGKLLIFLSVALVIMTLPFSLFVCFKVVQEYERAVIFRLGRLMQGGAKGPGIFFILPCIDSYARVDLRTRTYDVPPQEVLTKDSVTVSVDAVVYYRVSNATVSIANVENAHHSTRLLAQTTLRNTMGTRHLHEILSERMTISGTMQVQLDEATDAWGIKVERVEIKDVRLPVQLQRAMAAEAEAAREARAKVIAAEGEQKASRALREASEVIGDSPAALQLRYLQTLNTISAEKNSTIVFPLPIDLITYFLKTNEATTQQNARAAAAAIGNTPPPLQLAPQQQMGQQQQPQYQQPQQQQQQYQPQQQQQQQQQQPQQQDQLYQQGQQISSAM.

The interval 1-164 is disordered; sequence MPDSMMDMEH…IHRAEARRAD (164 aa). A compositionally biased stretch (basic and acidic residues) spans 47-60; sequence SEERDRDRDRERDH. Composition is skewed to low complexity over residues 82-104 and 113-139; these read QLHQ…QQPQ and QQQQ…QQLP. Residues 178 to 198 form a helical membrane-spanning segment; that stretch reads LIFLSVALVIMTLPFSLFVCF. A disordered region spans residues 443 to 505; it reads GNTPPPLQLA…QQGQQISSAM (63 aa). Low complexity predominate over residues 451 to 505; it reads LAPQQQMGQQQQPQYQQPQQQQQQYQPQQQQQQQQQQPQQQDQLYQQGQQISSAM.

The protein belongs to the band 7/mec-2 family.

It is found in the membrane. The chain is Band 7 protein CG42540 from Drosophila melanogaster (Fruit fly).